A 229-amino-acid chain; its full sequence is DNA mismatch repair protein MutH (229 aa).

The protein belongs to the MutH family.

It is found in the cytoplasm. Sequence-specific endonuclease that cleaves unmethylated GATC sequences. It is involved in DNA mismatch repair. In Shigella flexneri serotype 5b (strain 8401), this protein is DNA mismatch repair protein MutH.